Reading from the N-terminus, the 149-residue chain is Transcriptional repressor NrdR (149 aa).

A zinc finger spans residues 3-34 (CPFCGNLETQVVETRVSEDADFIRRRRQCGAC). Positions 49–139 (PAIVKKDGRR…VYRSFEDIDE (91 aa)) constitute an ATP-cone domain.

It belongs to the NrdR family. Zn(2+) is required as a cofactor.

Its function is as follows. Negatively regulates transcription of bacterial ribonucleotide reductase nrd genes and operons by binding to NrdR-boxes. The sequence is that of Transcriptional repressor NrdR from Polaromonas sp. (strain JS666 / ATCC BAA-500).